A 281-amino-acid chain; its full sequence is 2-C-methyl-D-erythritol 4-phosphate cytidylyltransferase (281 aa).

This sequence belongs to the IspD/TarI cytidylyltransferase family. IspD subfamily.

It carries out the reaction 2-C-methyl-D-erythritol 4-phosphate + CTP + H(+) = 4-CDP-2-C-methyl-D-erythritol + diphosphate. The protein operates within isoprenoid biosynthesis; isopentenyl diphosphate biosynthesis via DXP pathway; isopentenyl diphosphate from 1-deoxy-D-xylulose 5-phosphate: step 2/6. Its function is as follows. Catalyzes the formation of 4-diphosphocytidyl-2-C-methyl-D-erythritol from CTP and 2-C-methyl-D-erythritol 4-phosphate (MEP). This chain is 2-C-methyl-D-erythritol 4-phosphate cytidylyltransferase, found in Psychrobacter arcticus (strain DSM 17307 / VKM B-2377 / 273-4).